The following is a 304-amino-acid chain: GTPase Era (304 aa).

The Era-type G domain occupies 11–179 (YCGFIAIVGR…QKIVRKSLRE (169 aa)). The segment at 19-26 (GRPNVGKS) is G1. Residue 19–26 (GRPNVGKS) coordinates GTP. The interval 45 to 49 (QTTRH) is G2. Residues 66 to 69 (DTPG) are G3. GTP contacts are provided by residues 66–70 (DTPGL) and 128–131 (NKVD). The tract at residues 128-131 (NKVD) is G4. Positions 158–160 (ISA) are G5. Residues 210 to 287 (TGEELPYSVT…HLELWVKVKA (78 aa)) enclose the KH type-2 domain.

Belongs to the TRAFAC class TrmE-Era-EngA-EngB-Septin-like GTPase superfamily. Era GTPase family. As to quaternary structure, monomer.

It is found in the cytoplasm. It localises to the cell inner membrane. Functionally, an essential GTPase that binds both GDP and GTP, with rapid nucleotide exchange. Plays a role in 16S rRNA processing and 30S ribosomal subunit biogenesis and possibly also in cell cycle regulation and energy metabolism. The chain is GTPase Era from Haemophilus ducreyi (strain 35000HP / ATCC 700724).